A 107-amino-acid polypeptide reads, in one-letter code: Phosphoribosyl-ATP pyrophosphatase (107 aa).

This sequence belongs to the PRA-PH family.

Its subcellular location is the cytoplasm. It catalyses the reaction 1-(5-phospho-beta-D-ribosyl)-ATP + H2O = 1-(5-phospho-beta-D-ribosyl)-5'-AMP + diphosphate + H(+). It functions in the pathway amino-acid biosynthesis; L-histidine biosynthesis; L-histidine from 5-phospho-alpha-D-ribose 1-diphosphate: step 2/9. This Bacillus thuringiensis (strain Al Hakam) protein is Phosphoribosyl-ATP pyrophosphatase.